The following is a 271-amino-acid chain: 4-diphosphocytidyl-2-C-methyl-D-erythritol kinase (271 aa).

The active site involves Lys17. 97-107 (PVGSGLGGGSS) contributes to the ATP binding site. Asp137 is a catalytic residue.

This sequence belongs to the GHMP kinase family. IspE subfamily.

The enzyme catalyses 4-CDP-2-C-methyl-D-erythritol + ATP = 4-CDP-2-C-methyl-D-erythritol 2-phosphate + ADP + H(+). It participates in isoprenoid biosynthesis; isopentenyl diphosphate biosynthesis via DXP pathway; isopentenyl diphosphate from 1-deoxy-D-xylulose 5-phosphate: step 3/6. Catalyzes the phosphorylation of the position 2 hydroxy group of 4-diphosphocytidyl-2C-methyl-D-erythritol. In Thermotoga petrophila (strain ATCC BAA-488 / DSM 13995 / JCM 10881 / RKU-1), this protein is 4-diphosphocytidyl-2-C-methyl-D-erythritol kinase.